The following is a 536-amino-acid chain: 2-isopropylmalate synthase (536 aa).

Positions 8–269 (IIIFDTTLRD…YYNPFLGRPV (262 aa)) constitute a Pyruvate carboxyltransferase domain. Mn(2+) contacts are provided by Asp17, His208, His210, and Asn244. The interval 408–536 (RLELVQVSCG…KEKAAVTSAS (129 aa)) is regulatory domain.

The protein belongs to the alpha-IPM synthase/homocitrate synthase family. LeuA type 1 subfamily. In terms of assembly, homodimer. Requires Mn(2+) as cofactor.

It localises to the cytoplasm. It carries out the reaction 3-methyl-2-oxobutanoate + acetyl-CoA + H2O = (2S)-2-isopropylmalate + CoA + H(+). It functions in the pathway amino-acid biosynthesis; L-leucine biosynthesis; L-leucine from 3-methyl-2-oxobutanoate: step 1/4. Functionally, catalyzes the condensation of the acetyl group of acetyl-CoA with 3-methyl-2-oxobutanoate (2-ketoisovalerate) to form 3-carboxy-3-hydroxy-4-methylpentanoate (2-isopropylmalate). This Gloeothece citriformis (strain PCC 7424) (Cyanothece sp. (strain PCC 7424)) protein is 2-isopropylmalate synthase.